Consider the following 463-residue polypeptide: Chromosomal replication initiator protein DnaA (463 aa).

The domain I, interacts with DnaA modulators stretch occupies residues 1–83 (MSLTLWQQCL…LRFEVGSKPV (83 aa)). The interval 83–126 (VAQAISQPVMVSAHASAPGVVSRPAPTRPSWDNVPALAELSYRS) is domain II. The interval 127-343 (NVNTKHNFDN…GALNRVIANA (217 aa)) is domain III, AAA+ region. ATP contacts are provided by glycine 171, glycine 173, lysine 174, and threonine 175. The interval 344-463 (NFTGRAITID…FSNLIRTLSS (120 aa)) is domain IV, binds dsDNA.

It belongs to the DnaA family. As to quaternary structure, oligomerizes as a right-handed, spiral filament on DNA at oriC.

It localises to the cytoplasm. In terms of biological role, plays an essential role in the initiation and regulation of chromosomal replication. ATP-DnaA binds to the origin of replication (oriC) to initiate formation of the DNA replication initiation complex once per cell cycle. Binds the DnaA box (a 9 base pair repeat at the origin) and separates the double-stranded (ds)DNA. Forms a right-handed helical filament on oriC DNA; dsDNA binds to the exterior of the filament while single-stranded (ss)DNA is stabiized in the filament's interior. The ATP-DnaA-oriC complex binds and stabilizes one strand of the AT-rich DNA unwinding element (DUE), permitting loading of DNA polymerase. After initiation quickly degrades to an ADP-DnaA complex that is not apt for DNA replication. Binds acidic phospholipids. In Erwinia tasmaniensis (strain DSM 17950 / CFBP 7177 / CIP 109463 / NCPPB 4357 / Et1/99), this protein is Chromosomal replication initiator protein DnaA.